We begin with the raw amino-acid sequence, 168 residues long: Ribosome maturation factor RimM (168 aa).

Positions 96–168 constitute a PRC barrel domain; sequence EDEYFITDLI…VMIVRLLEGL (73 aa).

Belongs to the RimM family. Binds ribosomal protein uS19.

It is found in the cytoplasm. Its function is as follows. An accessory protein needed during the final step in the assembly of 30S ribosomal subunit, possibly for assembly of the head region. Essential for efficient processing of 16S rRNA. May be needed both before and after RbfA during the maturation of 16S rRNA. It has affinity for free ribosomal 30S subunits but not for 70S ribosomes. In Caldanaerobacter subterraneus subsp. tengcongensis (strain DSM 15242 / JCM 11007 / NBRC 100824 / MB4) (Thermoanaerobacter tengcongensis), this protein is Ribosome maturation factor RimM.